The chain runs to 92 residues: Turripeptide UID-02 (92 aa).

Positions 1 to 21 (MGFYMLLTVALLLTSLMNVEA) are cleaved as a signal peptide. The propeptide occupies 22-39 (TPVDQAERSALEKSGLGN).

As to expression, expressed by the venom duct.

Its subcellular location is the secreted. The polypeptide is Turripeptide UID-02 (Gemmula speciosa (Splendid gem-turris)).